A 437-amino-acid chain; its full sequence is Cobyrinate a,c-diamide synthase (437 aa).

The region spanning 241–430 is the GATase cobBQ-type domain; sequence KIAVAKDEAF…AHVHFFGNLD (190 aa). The Nucleophile role is filled by Cys323.

This sequence belongs to the CobB/CbiA family. The cofactor is Mg(2+).

It catalyses the reaction cob(II)yrinate + 2 L-glutamine + 2 ATP + 2 H2O = cob(II)yrinate a,c diamide + 2 L-glutamate + 2 ADP + 2 phosphate + 2 H(+). It functions in the pathway cofactor biosynthesis; adenosylcobalamin biosynthesis; cob(II)yrinate a,c-diamide from sirohydrochlorin (anaerobic route): step 10/10. In terms of biological role, catalyzes the ATP-dependent amidation of the two carboxylate groups at positions a and c of cobyrinate, using either L-glutamine or ammonia as the nitrogen source. In Clostridium acetobutylicum (strain ATCC 824 / DSM 792 / JCM 1419 / IAM 19013 / LMG 5710 / NBRC 13948 / NRRL B-527 / VKM B-1787 / 2291 / W), this protein is Cobyrinate a,c-diamide synthase.